The following is a 359-amino-acid chain: UPF0283 membrane protein RHE_CH02332 (359 aa).

The interval 1 to 61 (MSKPPSDLPR…EDPFINPDRD (61 aa)) is disordered. The next 2 helical transmembrane spans lie at 77–97 (FGKIALAAFGILLSLGIGLWT) and 111–131 (LGYAALGVLAIGILAVLALVI).

The protein belongs to the UPF0283 family.

The protein localises to the cell inner membrane. The protein is UPF0283 membrane protein RHE_CH02332 of Rhizobium etli (strain ATCC 51251 / DSM 11541 / JCM 21823 / NBRC 15573 / CFN 42).